Here is a 404-residue protein sequence, read N- to C-terminus: Nicotinate phosphoribosyltransferase (404 aa).

At histidine 224 the chain carries Phosphohistidine; by autocatalysis.

Belongs to the NAPRTase family. In terms of processing, transiently phosphorylated on a His residue during the reaction cycle. Phosphorylation strongly increases the affinity for substrates and increases the rate of nicotinate D-ribonucleotide production. Dephosphorylation regenerates the low-affinity form of the enzyme, leading to product release.

The catalysed reaction is nicotinate + 5-phospho-alpha-D-ribose 1-diphosphate + ATP + H2O = nicotinate beta-D-ribonucleotide + ADP + phosphate + diphosphate. It participates in cofactor biosynthesis; NAD(+) biosynthesis; nicotinate D-ribonucleotide from nicotinate: step 1/1. In terms of biological role, catalyzes the synthesis of beta-nicotinate D-ribonucleotide from nicotinate and 5-phospho-D-ribose 1-phosphate at the expense of ATP. This Photorhabdus laumondii subsp. laumondii (strain DSM 15139 / CIP 105565 / TT01) (Photorhabdus luminescens subsp. laumondii) protein is Nicotinate phosphoribosyltransferase.